The following is a 359-amino-acid chain: UDP-N-acetylglucosamine--N-acetylmuramyl-(pentapeptide) pyrophosphoryl-undecaprenol N-acetylglucosamine transferase (359 aa).

Residues T15–G17, N127, R166, S191, I245, A264–E269, and Q290 each bind UDP-N-acetyl-alpha-D-glucosamine.

This sequence belongs to the glycosyltransferase 28 family. MurG subfamily.

Its subcellular location is the cell inner membrane. It carries out the reaction di-trans,octa-cis-undecaprenyl diphospho-N-acetyl-alpha-D-muramoyl-L-alanyl-D-glutamyl-meso-2,6-diaminopimeloyl-D-alanyl-D-alanine + UDP-N-acetyl-alpha-D-glucosamine = di-trans,octa-cis-undecaprenyl diphospho-[N-acetyl-alpha-D-glucosaminyl-(1-&gt;4)]-N-acetyl-alpha-D-muramoyl-L-alanyl-D-glutamyl-meso-2,6-diaminopimeloyl-D-alanyl-D-alanine + UDP + H(+). It functions in the pathway cell wall biogenesis; peptidoglycan biosynthesis. In terms of biological role, cell wall formation. Catalyzes the transfer of a GlcNAc subunit on undecaprenyl-pyrophosphoryl-MurNAc-pentapeptide (lipid intermediate I) to form undecaprenyl-pyrophosphoryl-MurNAc-(pentapeptide)GlcNAc (lipid intermediate II). The sequence is that of UDP-N-acetylglucosamine--N-acetylmuramyl-(pentapeptide) pyrophosphoryl-undecaprenol N-acetylglucosamine transferase from Pseudomonas putida (strain ATCC 700007 / DSM 6899 / JCM 31910 / BCRC 17059 / LMG 24140 / F1).